Reading from the N-terminus, the 218-residue chain is N-(5'-phosphoribosyl)anthranilate isomerase (218 aa).

Belongs to the TrpF family.

It catalyses the reaction N-(5-phospho-beta-D-ribosyl)anthranilate = 1-(2-carboxyphenylamino)-1-deoxy-D-ribulose 5-phosphate. It functions in the pathway amino-acid biosynthesis; L-tryptophan biosynthesis; L-tryptophan from chorismate: step 3/5. This Rhodopseudomonas palustris (strain BisA53) protein is N-(5'-phosphoribosyl)anthranilate isomerase.